A 252-amino-acid polypeptide reads, in one-letter code: Imidazole glycerol phosphate synthase subunit HisF (252 aa).

Active-site residues include aspartate 12 and aspartate 131.

Belongs to the HisA/HisF family. In terms of assembly, heterodimer of HisH and HisF.

It is found in the cytoplasm. The catalysed reaction is 5-[(5-phospho-1-deoxy-D-ribulos-1-ylimino)methylamino]-1-(5-phospho-beta-D-ribosyl)imidazole-4-carboxamide + L-glutamine = D-erythro-1-(imidazol-4-yl)glycerol 3-phosphate + 5-amino-1-(5-phospho-beta-D-ribosyl)imidazole-4-carboxamide + L-glutamate + H(+). It functions in the pathway amino-acid biosynthesis; L-histidine biosynthesis; L-histidine from 5-phospho-alpha-D-ribose 1-diphosphate: step 5/9. In terms of biological role, IGPS catalyzes the conversion of PRFAR and glutamine to IGP, AICAR and glutamate. The HisF subunit catalyzes the cyclization activity that produces IGP and AICAR from PRFAR using the ammonia provided by the HisH subunit. The polypeptide is Imidazole glycerol phosphate synthase subunit HisF (Thermus thermophilus (strain ATCC 27634 / DSM 579 / HB8)).